The chain runs to 220 residues: Imidazoleglycerol-phosphate dehydratase (220 aa).

The protein belongs to the imidazoleglycerol-phosphate dehydratase family.

It catalyses the reaction D-erythro-1-(imidazol-4-yl)glycerol 3-phosphate = 3-(imidazol-4-yl)-2-oxopropyl phosphate + H2O. It functions in the pathway amino-acid biosynthesis; L-histidine biosynthesis; L-histidine from 5-phospho-alpha-D-ribose 1-diphosphate: step 6/9. This is Imidazoleglycerol-phosphate dehydratase (HIS3) from Eremothecium gossypii (strain ATCC 10895 / CBS 109.51 / FGSC 9923 / NRRL Y-1056) (Yeast).